Reading from the N-terminus, the 323-residue chain is Probable cell division protein WhiA (323 aa).

The segment at residues 279–313 (TLKELGEMVSGGKISKSGINHRLRKLDEIAERLRA) is a DNA-binding region (H-T-H motif).

The protein belongs to the WhiA family.

Its function is as follows. Involved in cell division and chromosome segregation. The chain is Probable cell division protein WhiA from Anoxybacillus flavithermus (strain DSM 21510 / WK1).